The sequence spans 905 residues: Probable coatomer subunit gamma (905 aa).

HEAT repeat units lie at residues 265-302 (TQFR…NISD), 303-340 (DDLQ…TRPH), 374-412 (DESV…KFPR), 414-450 (QDSM…YIPE), and 525-563 (KFVQ…RDAF). Position 604 is a phosphoserine (S604).

This sequence belongs to the COPG family. In terms of assembly, oligomeric complex that consists of at least the alpha, beta, beta', gamma, delta, epsilon and zeta subunits.

It localises to the cytoplasm. It is found in the golgi apparatus membrane. Its subcellular location is the cytoplasmic vesicle. The protein localises to the COPI-coated vesicle membrane. In terms of biological role, the coatomer is a cytosolic protein complex that binds to dilysine motifs and reversibly associates with Golgi non-clathrin-coated vesicles, which further mediate biosynthetic protein transport from the ER, via the Golgi up to the trans Golgi network. Coatomer complex is required for budding from Golgi membranes, and is essential for the retrograde Golgi-to-ER transport of dilysine-tagged proteins. The sequence is that of Probable coatomer subunit gamma (sec21) from Schizosaccharomyces pombe (strain 972 / ATCC 24843) (Fission yeast).